The sequence spans 273 residues: 4-hydroxy-tetrahydrodipicolinate reductase (273 aa).

Residues 12-17 and Glu38 contribute to the NAD(+) site; that span reads GAGGRM. An NADP(+)-binding site is contributed by Arg39. Residues 102–104 and 126–129 contribute to the NAD(+) site; these read GTT and AANF. His159 serves as the catalytic Proton donor/acceptor. His160 lines the (S)-2,3,4,5-tetrahydrodipicolinate pocket. Lys163 serves as the catalytic Proton donor. 169-170 provides a ligand contact to (S)-2,3,4,5-tetrahydrodipicolinate; it reads GT.

This sequence belongs to the DapB family. In terms of assembly, homotetramer.

The protein localises to the cytoplasm. It carries out the reaction (S)-2,3,4,5-tetrahydrodipicolinate + NAD(+) + H2O = (2S,4S)-4-hydroxy-2,3,4,5-tetrahydrodipicolinate + NADH + H(+). The catalysed reaction is (S)-2,3,4,5-tetrahydrodipicolinate + NADP(+) + H2O = (2S,4S)-4-hydroxy-2,3,4,5-tetrahydrodipicolinate + NADPH + H(+). It functions in the pathway amino-acid biosynthesis; L-lysine biosynthesis via DAP pathway; (S)-tetrahydrodipicolinate from L-aspartate: step 4/4. Catalyzes the conversion of 4-hydroxy-tetrahydrodipicolinate (HTPA) to tetrahydrodipicolinate. The chain is 4-hydroxy-tetrahydrodipicolinate reductase from Escherichia coli (strain K12 / MC4100 / BW2952).